A 284-amino-acid polypeptide reads, in one-letter code: Small ribosomal subunit protein uS5z (284 aa).

Residues Met-1–Phe-19 show a composition bias toward basic and acidic residues. The tract at residues Met-1 to Thr-51 is disordered. A compositionally biased stretch (gly residues) spans Gly-20–Gly-29. Residues Leu-95–Val-158 enclose the S5 DRBM domain.

Belongs to the universal ribosomal protein uS5 family.

This is Small ribosomal subunit protein uS5z (RPS2A) from Arabidopsis thaliana (Mouse-ear cress).